A 275-amino-acid polypeptide reads, in one-letter code: Mitochondrial outer membrane protein porin (275 aa).

Methionine 1 is modified (blocked amino end (Met)).

The protein belongs to the eukaryotic mitochondrial porin family. Highly divergent.

It is found in the mitochondrion outer membrane. In terms of biological role, forms a channel of about 1,7 nM through the cell membrane that allows diffusion of small hydrophilic molecules. The channel adopts an open conformation at low or zero membrane potential and a closed conformation at potentials above 20 mv. The open state has a weak anion selectivity whereas the closed state is cation-selective. The sequence is that of Mitochondrial outer membrane protein porin (porA) from Dictyostelium discoideum (Social amoeba).